The following is a 317-amino-acid chain: Ribosomal protein L11 methyltransferase (317 aa).

Thr158, Gly179, Asp201, and Asn244 together coordinate S-adenosyl-L-methionine.

This sequence belongs to the methyltransferase superfamily. PrmA family.

The protein resides in the cytoplasm. It carries out the reaction L-lysyl-[protein] + 3 S-adenosyl-L-methionine = N(6),N(6),N(6)-trimethyl-L-lysyl-[protein] + 3 S-adenosyl-L-homocysteine + 3 H(+). In terms of biological role, methylates ribosomal protein L11. This chain is Ribosomal protein L11 methyltransferase, found in Streptococcus pyogenes serotype M3 (strain ATCC BAA-595 / MGAS315).